A 457-amino-acid polypeptide reads, in one-letter code: UDP-N-acetylmuramate--L-alanine ligase (457 aa).

112–118 serves as a coordination point for ATP; it reads GAHGKTS.

Belongs to the MurCDEF family.

The protein localises to the cytoplasm. It catalyses the reaction UDP-N-acetyl-alpha-D-muramate + L-alanine + ATP = UDP-N-acetyl-alpha-D-muramoyl-L-alanine + ADP + phosphate + H(+). It functions in the pathway cell wall biogenesis; peptidoglycan biosynthesis. Cell wall formation. The protein is UDP-N-acetylmuramate--L-alanine ligase of Desulfosudis oleivorans (strain DSM 6200 / JCM 39069 / Hxd3) (Desulfococcus oleovorans).